The following is a 480-amino-acid chain: Flotillin-like protein 2 (480 aa).

Cys37 carries the S-palmitoyl cysteine lipid modification. Positions 237–257 form a coiled coil; the sequence is ENQREAEVAQANSELAKKKAA.

The protein belongs to the band 7/mec-2 family. Flotillin subfamily. May be palmitoylated. Expressed in flowers in green pods. Primarily expressed in vascular tissues. Upon induction of nodulation, expansion of expression in the root cortex in the region of elongating root hairs, which will eventually become colonized by bacteria. Expressed in the infection zone in nodules.

It localises to the cell membrane. Its subcellular location is the membrane. The protein localises to the caveola. Functionally, may act as a scaffolding protein within caveolar membranes, functionally participating in formation of caveolae or caveolae-like vesicles. Required for early symbiotic events and nodules formation. The polypeptide is Flotillin-like protein 2 (FLOT2) (Medicago truncatula (Barrel medic)).